A 344-amino-acid chain; its full sequence is Gas vesicle ATPase GvpN2 (344 aa).

Residues 1–55 (MTDTSRNRKVRGSKIRSSRSDKRQSRGSEDKELKRLADARDTDSEQAGDRVGDAF) form a disordered region. Basic residues predominate over residues 7-17 (NRKVRGSKIRS). Basic and acidic residues predominate over residues 18–52 (SRSDKRQSRGSEDKELKRLADARDTDSEQAGDRVG). An ATP-binding site is contributed by 89 to 96 (GPTGCGKT).

The protein belongs to the CbbQ/NirQ/NorQ/GpvN family. Forms homodimers, a GvpN-GvpO heterodimer, interacts with GvpC and GvpL, might interact with GvpA.

Its subcellular location is the gas vesicle. It localises to the cytoplasm. It catalyses the reaction ATP + H2O = ADP + phosphate + H(+). Functionally, an ATPase that functions in gas vesicle formation. A minor component of the gas vesicle, also found in soluble extracts. Gas vesicles are hollow, gas filled proteinaceous nanostructures found in several microbial planktonic microorganisms. They allow positioning of halobacteria at the optimal depth for growth in the poorly aerated, shallow brine pools of their habitat. Expression of 2 c-vac DNA fragments containing 2 divergently transcribed regions (gvpE-gvpF-gvpG-gvpH-gvpI-gvpJ-gvpK-gvpL-gvpM and gvpA-gvpC-gvpN-gvpO) allows H.volcanii to produce gas vesicles. In Halobacterium salinarum (strain ATCC 700922 / JCM 11081 / NRC-1) (Halobacterium halobium), this protein is Gas vesicle ATPase GvpN2.